The sequence spans 439 residues: Glutamate-1-semialdehyde 2,1-aminomutase (439 aa).

An N6-(pyridoxal phosphate)lysine modification is found at Lys279.

The protein belongs to the class-III pyridoxal-phosphate-dependent aminotransferase family. HemL subfamily. As to quaternary structure, homodimer. Pyridoxal 5'-phosphate serves as cofactor.

It is found in the cytoplasm. It carries out the reaction (S)-4-amino-5-oxopentanoate = 5-aminolevulinate. It functions in the pathway porphyrin-containing compound metabolism; protoporphyrin-IX biosynthesis; 5-aminolevulinate from L-glutamyl-tRNA(Glu): step 2/2. This Rhodopirellula baltica (strain DSM 10527 / NCIMB 13988 / SH1) protein is Glutamate-1-semialdehyde 2,1-aminomutase.